Reading from the N-terminus, the 415-residue chain is Esterase FrsA (415 aa).

This sequence belongs to the FrsA family. As to quaternary structure, monomer in solution. Homodimer. Forms a 1:1 complex with the unphosphorylated form of the EIIA component of the glucose-specific PTS system (IIAGlc).

It catalyses the reaction a carboxylic ester + H2O = an alcohol + a carboxylate + H(+). In terms of biological role, catalyzes the hydrolysis of esters. In vitro, prefers short chain alkanoate ester as substrate. Displays highest activity towards p-nitrophenyl acetate (pNPA). Has weaker activity towards p-nitrophenyl butyrate (pNPB). In Vibrio vulnificus (strain CMCP6), this protein is Esterase FrsA.